A 201-amino-acid polypeptide reads, in one-letter code: Recombination protein RecR (201 aa).

Residues 60-75 (CSVCGNVDTSDPCTIC) form a C4-type zinc finger. Residues 83–178 (ATLIVVEDVS…RVTKLAHGVP (96 aa)) form the Toprim domain.

Belongs to the RecR family.

Functionally, may play a role in DNA repair. It seems to be involved in an RecBC-independent recombinational process of DNA repair. It may act with RecF and RecO. The sequence is that of Recombination protein RecR from Chelativorans sp. (strain BNC1).